Consider the following 601-residue polypeptide: DNA ligase (601 aa).

Asp-258 provides a ligand contact to ATP. Residue Lys-260 is the N6-AMP-lysine intermediate of the active site. Residues Arg-265, Arg-280, Glu-310, Phe-350, Arg-427, and Lys-433 each coordinate ATP. Positions 568-601 are disordered; that stretch reads DKSPEDATTTDEILEMYNKQPKKKIESPPIDESV.

The protein belongs to the ATP-dependent DNA ligase family. Mg(2+) serves as cofactor.

It catalyses the reaction ATP + (deoxyribonucleotide)n-3'-hydroxyl + 5'-phospho-(deoxyribonucleotide)m = (deoxyribonucleotide)n+m + AMP + diphosphate.. Functionally, DNA ligase that seals nicks in double-stranded DNA during DNA replication, DNA recombination and DNA repair. The chain is DNA ligase from Saccharolobus islandicus (strain Y.N.15.51 / Yellowstone #2) (Sulfolobus islandicus).